The chain runs to 1503 residues: MEPSALRKAGSEQEEGFEGLPRRVTDLGMVSNLRRSNSSLFKSWRLQCPFGNNDKQESLSSWIPENIKKKECVYFVESSKLSDAGKVVCQCGYTHEQHLEEATKPHTFQGTQWDPKKHVQEMPTDAFGDIVFTGLSQKVKKYVRVSQDTPSSVIYHLMTQHWGLDVPNLLISVTGGAKNFNMKPRLKSIFRRGLVKVAQTTGAWIITGGSHTGVMKQVGEAVRDFSLSSSYKEGELITIGVATWGTVHRREGLIHPTGSFPAEYILDEDGQGNLTCLDSNHSHFILVDDGTHGQYGVEIPLRTRLEKFISEQTKERGGVAIKIPIVCVVLEGGPGTLHTIDNATTNGTPCVVVEGSGRVADVIAQVANLPVSDITISLIQQKLSVFFQEMFETFTESRIVEWTKKIQDIVRRRQLLTVFREGKDGQQDVDVAILQALLKASRSQDHFGHENWDHQLKLAVAWNRVDIARSEIFMDEWQWKPSDLHPTMTAALISNKPEFVKLFLENGVQLKEFVTWDTLLYLYENLDPSCLFHSKLQKVLVEDPERPACAPAAPRLQMHHVAQVLRELLGDFTQPLYPRPRHNDRLRLLLPVPHVKLNVQGVSLRSLYKRSSGHVTFTMDPIRDLLIWAIVQNRRELAGIIWAQSQDCIAAALACSKILKELSKEEEDTDSSEEMLALAEEYEHRAIGVFTECYRKDEERAQKLLTRVSEAWGKTTCLQLALEAKDMKFVSHGGIQAFLTKVWWGQLSVDNGLWRVTLCMLAFPLLLTGLISFREKRLQDVGTPAARARAFFTAPVVVFHLNILSYFAFLCLFAYVLMVDFQPVPSWCECAIYLWLFSLVCEEMRQLFYDPDECGLMKKAALYFSDFWNKLDVGAILLFVAGLTCRLIPATLYPGRVILSLDFILFCLRLMHIFTISKTLGPKIIIVKRMMKDVFFFLFLLAVWVVSFGVAKQAILIHNERRVDWLFRGAVYHSYLTIFGQIPGYIDGVNFNPEHCSPNGTDPYKPKCPESDATQQRPAFPEWLTVLLLCLYLLFTNILLLNLLIAMFNYTFQQVQEHTDQIWKFQRHDLIEEYHGRPAAPPPFILLSHLQLFIKRVVLKTPAKRHKQLKNKLEKNEEAALLSWEIYLKENYLQNRQFQQKQRPEQKIEDISNKVDAMVDLLDLDPLKRSGSMEQRLASLEEQVAQTAQALHWIVRTLRASGFSSEADVPTLASQKAAEEPDAEPGGRKKTEEPGDSYHVNARHLLYPNCPVTRFPVPNEKVPWETEFLIYDPPFYTAERKDAAAMDPMGDTLEPLSTIQYNVVDGLRDRRSFHGPYTVQAGLPLNPMGRTGLRGRGSLSCFGPNHTLYPMVTRWRRNEDGAICRKSIKKMLEVLVVKLPLSEHWALPGGSREPGEMLPRKLKRILRQEHWPSFENLLKCGMEVYKGYMDDPRNTDNAWIETVAVSVHFQDQNDVELNRLNSNLHACDSGASIRWQVVDRRIPLYANHKTLLQKAAAEFGAHY.

Positions 1–20 (MEPSALRKAGSEQEEGFEGL) are disordered. Residues 1-752 (MEPSALRKAG…WWGQLSVDNG (752 aa)) lie on the Cytoplasmic side of the membrane. Residues Thr174, Asn179, Arg302, Gly333, and Thr336 each coordinate ADP-D-ribose. At Thr740 the chain carries Phosphothreonine. The stretch at 753–769 (LWRVTLCMLAFPLLLTG) is an intramembrane region. The Cytoplasmic segment spans residues 770–795 (LISFREKRLQDVGTPAARARAFFTAP). A helical membrane pass occupies residues 796-816 (VVVFHLNILSYFAFLCLFAYV). Residues 817-827 (LMVDFQPVPSW) lie on the Extracellular side of the membrane. A helical membrane pass occupies residues 828-848 (CECAIYLWLFSLVCEEMRQLF). Ca(2+)-binding residues include Glu843 and Gln846. Over 849–867 (YDPDECGLMKKAALYFSDF) the chain is Cytoplasmic. The helical transmembrane segment at 868–888 (WNKLDVGAILLFVAGLTCRLI) threads the bilayer. Asn869 is a binding site for Ca(2+). Topologically, residues 889–896 (PATLYPGR) are extracellular. Residues 897–917 (VILSLDFILFCLRLMHIFTIS) traverse the membrane as a helical segment. At 918 to 929 (KTLGPKIIIVKR) the chain is on the cytoplasmic side. Residues 930–950 (MMKDVFFFLFLLAVWVVSFGV) form a helical membrane-spanning segment. The Extracellular segment spans residues 951–970 (AKQAILIHNERRVDWLFRGA). The pore-forming intramembrane region spans 971–985 (VYHSYLTIFGQIPGY). Positions 979 to 982 (FGQI) match the Selectivity filter motif. Topologically, residues 986 to 1022 (IDGVNFNPEHCSPNGTDPYKPKCPESDATQQRPAFPE) are extracellular. Cys996 and Cys1008 are disulfide-bonded. Residues 1023–1044 (WLTVLLLCLYLLFTNILLLNLL) traverse the membrane as a helical segment. Residues 1045–1079 (IAMFNYTFQQVQEHTDQIWKFQRHDLIEEYHGRPA) lie on the Cytoplasmic side of the membrane. Glu1073 contributes to the Ca(2+) binding site. Residues 1080–1098 (APPPFILLSHLQLFIKRVV) lie within the membrane without spanning it. Over 1099–1503 (LKTPAKRHKQ…KAAAEFGAHY (405 aa)) the chain is Cytoplasmic. The disordered stretch occupies residues 1206 to 1237 (EADVPTLASQKAAEEPDAEPGGRKKTEEPGDS). Positions 1354-1498 (RWRRNEDGAI…KTLLQKAAAE (145 aa)) constitute a Nudix hydrolase domain. Leu1381 and Ser1382 together coordinate ADP-D-ribose. The Nudix box motif lies at 1390 to 1411 (GSREPGEMLPRKLKRILRQEHW). ADP-D-ribose is bound by residues Asp1431, Arg1433, Tyr1485, and Asn1487.

Belongs to the transient receptor (TC 1.A.4) family. LTrpC subfamily. TRPM2 sub-subfamily. In terms of assembly, homotetramer. Isoform 1 can interact with isoform 3. This interaction decreases Ca(2+) influx through isoform 1 and suppresses susceptibility to oxidative stress-induced cell death. Post-translationally, phosphorylation of TRPM2 at Thr-740 by protein kinase C (PKC) counteracts the effect of cytosolic Ca(2+) and elevates the temperature threshold. In terms of tissue distribution, highly expressed in brain and peripheral blood cells, such as neutrophils. Also detected in bone marrow, spleen, heart, liver and lung. Isoform 2 is found in neutrophil granulocytes.

Its subcellular location is the cell membrane. It is found in the perikaryon. The protein resides in the cell projection. The protein localises to the cytoplasmic vesicle. It localises to the lysosome. It catalyses the reaction Ca(2+)(in) = Ca(2+)(out). The enzyme catalyses Na(+)(in) = Na(+)(out). Its activity is regulated as follows. Activated by intracellular ADP-ribose, beta-NAD (NAD(+)) and similar compounds, and by oxidative stress caused by reactive oxygen or nitrogen species. Ca(2+) and PI(4,5)P2 are required for channel opening by ADP-ribose. Activation by ADP-ribose and beta-NAD is strongly increased by moderate heat (35 to 40 degrees Celsius). Likewise, reactive oxygen species lower the threshold for activation by moderate heat (37 degrees Celsius). Activated by moderate heat (35 to 40 degrees Celsius). Inactivated by exposure to extracellular pH between 4.0 and 6.5; irreversibly inactivated when open channels are exposed to extracellular pH between 4.0 and 6.5, while pre-exposure of closed channels to extracellular pH 5.5 gives rise to currents that rapidly inactivate, but protects against irreversible inactivation. Inactivated by intracellular ATP. Activated by arachidonic acid. Inhibited by 2-aminoethyl diphenylborinate (2-APB). Its function is as follows. Nonselective, voltage-independent cation channel that mediates Na(+) and Ca(2+) influx, leading to increased cytoplasmic Ca(2+) levels. Functions as a ligand-gated ion channel, gated by intracellular adenosine diphosphate ribose (ADP-ribose), Ca(2+), warm temperature, and oxidative stress. The precise physiological activators are under debate; the true, physiological activators may be ADP-ribose and ADP-ribose-2'-phosphate. Binding of ADP-ribose to the cytoplasmic Nudix domain causes a conformation change; the channel is primed but still requires Ca(2+) binding to trigger channel opening. Extracellular Ca(2+) passes through the channel and increases channel activity. Contributes to Ca(2+) release from intracellular stores in response to ADP-ribose. Plays a role in numerous processes that involve signaling via intracellular Ca(2+) levels. Besides, mediates the release of lysosomal Zn(2+) stores in response to reactive oxygen species, leading to increased cytosolic Zn(2+) levels. Plays a role in mediating behavorial and physiological responses to moderate heat and thereby contributes to body temperature homeostasis. Plays a role in insulin secretion, a process that requires increased cytoplasmic Ca(2+) levels. Required for normal IFNG and cytokine secretion and normal innate immune immunity in response to bacterial infection. Required for normal phagocytosis and cytokine release by macrophages exposed to zymosan (in vitro). Plays a role in dendritic cell differentiation and maturation, and in dendritic cell chemotaxis via its role in regulating cytoplasmic Ca(2+) levels. Plays a role in the regulation of the reorganization of the actin cytoskeleton and filopodia formation in response to reactive oxygen species via its role in increasing cytoplasmic Ca(2+) and Zn(2+) levels. Confers susceptibility to cell death following oxidative stress. Functionally, lacks cation channel activity. Does not mediate cation transport in response to oxidative stress or ADP-ribose. In terms of biological role, lacks cation channel activity and negatively regulates the channel activity of isoform 1. Negatively regulates susceptibility to cell death in reposponse to oxidative stress. The protein is Transient receptor potential cation channel subfamily M member 2 (TRPM2) of Homo sapiens (Human).